A 63-amino-acid polypeptide reads, in one-letter code: Large ribosomal subunit protein bL28 (63 aa).

The protein belongs to the bacterial ribosomal protein bL28 family.

The polypeptide is Large ribosomal subunit protein bL28 (Solibacter usitatus (strain Ellin6076)).